The sequence spans 318 residues: Peroxisomal targeting signal 2 receptor (318 aa).

WD repeat units lie at residues 60 to 91 (DWND…QLWD), 104 to 136 (EHTQ…KVWD), 148 to 179 (GHES…RIWD), 191 to 222 (AHQT…RGWD), 235 to 266 (GHTY…RFWN), and 279 to 310 (HHTE…KIYD).

It belongs to the WD repeat peroxin-7 family. Interacts with PEX5; interaction only takes place when PEX7 is associated with cargo proteins. Interacts with VWA8.

Its subcellular location is the cytoplasm. The protein localises to the cytosol. It is found in the peroxisome matrix. Functionally, receptor required for the peroxisomal import of proteins containing a C-terminal PTS2-type peroxisomal targeting signal. Specifically binds to cargo proteins containing a PTS2 peroxisomal targeting signal in the cytosol. Cargo protein-binding triggers interaction with PEX5 and formation of a ternary complex composed of PEX5 and PEX7 along with PTS2-containing cargo proteins, which is tranlocated into peroxisomes by passing through the PEX13-PEX14 docking complex. The chain is Peroxisomal targeting signal 2 receptor from Mus musculus (Mouse).